A 460-amino-acid polypeptide reads, in one-letter code: Argininosuccinate lyase (460 aa).

This sequence belongs to the lyase 1 family. Argininosuccinate lyase subfamily.

The protein localises to the cytoplasm. The catalysed reaction is 2-(N(omega)-L-arginino)succinate = fumarate + L-arginine. It functions in the pathway amino-acid biosynthesis; L-arginine biosynthesis; L-arginine from L-ornithine and carbamoyl phosphate: step 3/3. The chain is Argininosuccinate lyase from Alteromonas mediterranea (strain DSM 17117 / CIP 110805 / LMG 28347 / Deep ecotype).